The sequence spans 172 residues: 16S rRNA aminocarboxypropyltransferase (172 aa).

S-adenosyl-L-methionine is bound by residues T21, L71, L93, and T112.

The protein belongs to the TDD superfamily. TSR3 family.

The protein localises to the cytoplasm. It catalyses the reaction an N(1)-methylpseudouridine in rRNA + S-adenosyl-L-methionine = N(1)-methyl-N(3)-[(3S)-3-amino-3-carboxypropyl]pseudouridine in rRNA + S-methyl-5'-thioadenosine + H(+). In terms of biological role, aminocarboxypropyltransferase that catalyzes the aminocarboxypropyl transfer on pseudouridine at position 914 in 16S rRNA. It constitutes the last step in biosynthesis of the hypermodified N1-methyl-N3-(3-amino-3-carboxypropyl) pseudouridine (m1acp3-Psi). This Methanocaldococcus jannaschii (strain ATCC 43067 / DSM 2661 / JAL-1 / JCM 10045 / NBRC 100440) (Methanococcus jannaschii) protein is 16S rRNA aminocarboxypropyltransferase.